The sequence spans 309 residues: 4-hydroxy-3-methylbut-2-enyl diphosphate reductase (309 aa).

A [4Fe-4S] cluster-binding site is contributed by Cys12. (2E)-4-hydroxy-3-methylbut-2-enyl diphosphate-binding residues include His41 and His74. Dimethylallyl diphosphate-binding residues include His41 and His74. His41 and His74 together coordinate isopentenyl diphosphate. Cys96 is a binding site for [4Fe-4S] cluster. His124 is a binding site for (2E)-4-hydroxy-3-methylbut-2-enyl diphosphate. His124 is a dimethylallyl diphosphate binding site. An isopentenyl diphosphate-binding site is contributed by His124. The Proton donor role is filled by Glu126. Thr167 contributes to the (2E)-4-hydroxy-3-methylbut-2-enyl diphosphate binding site. Residue Cys197 participates in [4Fe-4S] cluster binding. Residues Ser225, Ser226, Asn227, and Ser269 each contribute to the (2E)-4-hydroxy-3-methylbut-2-enyl diphosphate site. The dimethylallyl diphosphate site is built by Ser225, Ser226, Asn227, and Ser269. Isopentenyl diphosphate is bound by residues Ser225, Ser226, Asn227, and Ser269.

This sequence belongs to the IspH family. The cofactor is [4Fe-4S] cluster.

It catalyses the reaction isopentenyl diphosphate + 2 oxidized [2Fe-2S]-[ferredoxin] + H2O = (2E)-4-hydroxy-3-methylbut-2-enyl diphosphate + 2 reduced [2Fe-2S]-[ferredoxin] + 2 H(+). The catalysed reaction is dimethylallyl diphosphate + 2 oxidized [2Fe-2S]-[ferredoxin] + H2O = (2E)-4-hydroxy-3-methylbut-2-enyl diphosphate + 2 reduced [2Fe-2S]-[ferredoxin] + 2 H(+). Its pathway is isoprenoid biosynthesis; dimethylallyl diphosphate biosynthesis; dimethylallyl diphosphate from (2E)-4-hydroxy-3-methylbutenyl diphosphate: step 1/1. It functions in the pathway isoprenoid biosynthesis; isopentenyl diphosphate biosynthesis via DXP pathway; isopentenyl diphosphate from 1-deoxy-D-xylulose 5-phosphate: step 6/6. Functionally, catalyzes the conversion of 1-hydroxy-2-methyl-2-(E)-butenyl 4-diphosphate (HMBPP) into a mixture of isopentenyl diphosphate (IPP) and dimethylallyl diphosphate (DMAPP). Acts in the terminal step of the DOXP/MEP pathway for isoprenoid precursor biosynthesis. The sequence is that of 4-hydroxy-3-methylbut-2-enyl diphosphate reductase from Colwellia psychrerythraea (strain 34H / ATCC BAA-681) (Vibrio psychroerythus).